The chain runs to 361 residues: Replication-associated protein (361 aa).

The CRESS-DNA virus Rep endonuclease domain occupies 8–116 (AINAKNYFLT…DGDVLDHGSF (109 aa)). Residues 15 to 18 (FLTY) carry the RCR-1 motif. 3 residues coordinate a divalent metal cation: glutamate 49, histidine 57, and histidine 59. Residues 57–59 (HLH) carry the RCR-2 motif. The For DNA cleavage activity role is filled by tyrosine 103. The RCR-3 motif lies at 103 to 106 (YMDK). Aspartate 107 lines the a divalent metal cation pocket. The segment at 143–153 (KLQALNILREK) is binding to RBR1. The segment at 156-176 (KDYILQFHNLNCNLSRIFADD) is oligomerization. Residue 220–227 (GDSRTGKT) coordinates ATP.

This sequence belongs to the geminiviridae Rep protein family. Homooligomer. Interacts with the replication enhancer protein (REn). Interacts with host retinoblastoma-related protein 1 (RBR1), and may thereby induce the transcription of host replicative enzymes even if the cell is not dividing anymore. Interacts with host PCNA. Interacts with host SCE1 protein. Binds to host RAD54 protein to ensure geminiviral replication. Requires Mg(2+) as cofactor. The cofactor is Mn(2+).

Its subcellular location is the host nucleus. Its function is as follows. Essential for the replication of viral ssDNA. The closed circular ssDNA genome is first converted to a superhelical dsDNA. Rep binds a specific region at the genome origin of replication. It introduces an endonucleolytic nick within the conserved sequence 5'-TAATATTAC-3' in the intergenic region of the genome present in all geminiviruses, thereby initiating the rolling circle replication (RCR). Following cleavage, binds covalently to the 5'-phosphate of DNA as a tyrosyl ester. The cleavage gives rise to a free 3'-OH that serves as a primer for the cellular DNA polymerase. The polymerase synthesizes the (+) strand DNA by rolling circle mechanism. After one round of replication, a Rep-catalyzed nucleotidyl transfer reaction releases a circular single-stranded virus genome, thereby terminating the replication. Displays origin-specific DNA cleavage, nucleotidyl transferase, ATPase and helicase activities. The chain is Replication-associated protein from Mungbean yellow mosaic virus (strain Vigna) (MYMV).